Consider the following 96-residue polypeptide: ESAT-6-like protein SAG0230 (96 aa).

It belongs to the WXG100 family. sagEsxA-like subfamily. In terms of assembly, homodimer.

This Streptococcus agalactiae serotype V (strain ATCC BAA-611 / 2603 V/R) protein is ESAT-6-like protein SAG0230.